Here is a 445-residue protein sequence, read N- to C-terminus: Cyclic GMP-AMP synthase-like receptor 1 (445 aa).

Positions 70, 72, and 186 each coordinate Mg(2+). Residue glutamate 70 to aspartate 72 participates in ATP binding. Residues aspartate 186 and arginine 232–glutamate 239 contribute to the GTP site. ATP-binding positions include tyrosine 236 to glutamate 239, lysine 257, and serine 270 to lysine 274. Positions leucine 357–serine 445 are disordered. A compositionally biased stretch (basic and acidic residues) spans glutamine 377–alanine 398. A compositionally biased stretch (low complexity) spans threonine 435–serine 445.

This sequence belongs to the mab-21 family. It depends on Mg(2+) as a cofactor. Mn(2+) is required as a cofactor.

It catalyses the reaction GTP + ATP = 3',2'-cGAMP + 2 diphosphate. The catalysed reaction is GTP + ATP = pppA(2'-5')pG + diphosphate. The enzyme catalyses pppA(2'-5')pG = 3',2'-cGAMP + diphosphate. Its activity is regulated as follows. The enzyme activity is specifically activated by double-stranded RNA (dsRNA). Nucleotidyltransferase that catalyzes the formation of cyclic GMP-AMP (3',2'-cGAMP) from ATP and GTP and plays a key role in innate immunity. Synthesizes 3',2'-cGAMP in a two-step reaction through production of the linear intermediate pppA(2'-5')pG. Acts as a key sensor of double-stranded RNA (dsRNA), the presence of dsRNA in the cytoplasm being a danger signal that triggers the immune responses. Directly binds dsRNA, activating the nucleotidyltransferase activity, leading to synthesis of 3',2'-cGAMP, a second messenger that binds to and activates Sting, thereby triggering the antiviral immune response via activation of the NF-kappa-B transcription factor Rel (Relish). The sequence is that of Cyclic GMP-AMP synthase-like receptor 1 from Drosophila erecta (Fruit fly).